A 342-amino-acid polypeptide reads, in one-letter code: N-acetyl-gamma-glutamyl-phosphate reductase (342 aa).

Cysteine 146 is an active-site residue.

Belongs to the NAGSA dehydrogenase family. Type 1 subfamily.

It localises to the cytoplasm. It carries out the reaction N-acetyl-L-glutamate 5-semialdehyde + phosphate + NADP(+) = N-acetyl-L-glutamyl 5-phosphate + NADPH + H(+). Its pathway is amino-acid biosynthesis; L-arginine biosynthesis; N(2)-acetyl-L-ornithine from L-glutamate: step 3/4. Functionally, catalyzes the NADPH-dependent reduction of N-acetyl-5-glutamyl phosphate to yield N-acetyl-L-glutamate 5-semialdehyde. In Streptomyces coelicolor (strain ATCC BAA-471 / A3(2) / M145), this protein is N-acetyl-gamma-glutamyl-phosphate reductase.